The following is a 695-amino-acid chain: Threonine--tRNA ligase (695 aa).

Positions 6–75 (SAIFVNTTDT…ETTATFTAVP (70 aa)) constitute a TGS domain. The interval 274-580 (DHRRLGTELD…LLEHYAGAFP (307 aa)) is catalytic. Residues Cys379, His430, and His557 each coordinate Zn(2+).

Belongs to the class-II aminoacyl-tRNA synthetase family. As to quaternary structure, homodimer. Zn(2+) is required as a cofactor.

It is found in the cytoplasm. The catalysed reaction is tRNA(Thr) + L-threonine + ATP = L-threonyl-tRNA(Thr) + AMP + diphosphate + H(+). Functionally, catalyzes the attachment of threonine to tRNA(Thr) in a two-step reaction: L-threonine is first activated by ATP to form Thr-AMP and then transferred to the acceptor end of tRNA(Thr). Also edits incorrectly charged L-seryl-tRNA(Thr). This chain is Threonine--tRNA ligase, found in Corynebacterium glutamicum (strain ATCC 13032 / DSM 20300 / JCM 1318 / BCRC 11384 / CCUG 27702 / LMG 3730 / NBRC 12168 / NCIMB 10025 / NRRL B-2784 / 534).